Reading from the N-terminus, the 114-residue chain is Nucleoid-associated protein PCC8801_2554 (114 aa).

Belongs to the YbaB/EbfC family. As to quaternary structure, homodimer.

The protein resides in the cytoplasm. It is found in the nucleoid. Its function is as follows. Binds to DNA and alters its conformation. May be involved in regulation of gene expression, nucleoid organization and DNA protection. The protein is Nucleoid-associated protein PCC8801_2554 of Rippkaea orientalis (strain PCC 8801 / RF-1) (Cyanothece sp. (strain PCC 8801)).